A 246-amino-acid chain; its full sequence is Acetoacetate decarboxylase (246 aa).

The active-site Schiff-base intermediate with acetoacetate is K116.

It belongs to the ADC family.

It catalyses the reaction acetoacetate + H(+) = acetone + CO2. In terms of biological role, catalyzes the conversion of acetoacetate to acetone and carbon dioxide. The chain is Acetoacetate decarboxylase from Burkholderia mallei (strain NCTC 10247).